Consider the following 318-residue polypeptide: Biotin synthase (318 aa).

In terms of domain architecture, Radical SAM core spans D40–L260. [4Fe-4S] cluster is bound by residues C55, C59, and C62. 4 residues coordinate [2Fe-2S] cluster: C100, C132, C192, and R264.

It belongs to the radical SAM superfamily. Biotin synthase family. Homodimer. [4Fe-4S] cluster serves as cofactor. The cofactor is [2Fe-2S] cluster.

The catalysed reaction is (4R,5S)-dethiobiotin + (sulfur carrier)-SH + 2 reduced [2Fe-2S]-[ferredoxin] + 2 S-adenosyl-L-methionine = (sulfur carrier)-H + biotin + 2 5'-deoxyadenosine + 2 L-methionine + 2 oxidized [2Fe-2S]-[ferredoxin]. The protein operates within cofactor biosynthesis; biotin biosynthesis; biotin from 7,8-diaminononanoate: step 2/2. Catalyzes the conversion of dethiobiotin (DTB) to biotin by the insertion of a sulfur atom into dethiobiotin via a radical-based mechanism. In Ruegeria pomeroyi (strain ATCC 700808 / DSM 15171 / DSS-3) (Silicibacter pomeroyi), this protein is Biotin synthase.